Reading from the N-terminus, the 993-residue chain is Importin subunit beta-5 (993 aa).

Residues 24 to 100 (AELGLRDLEK…RETLLHLLVS (77 aa)) enclose the Importin N-terminal domain.

It is found in the nucleus. Functionally, required for nuclear protein import and mediates docking of import substrate to distinct nucleoporins. Serves a receptor for nuclear localization signals. Mediates the nuclear import of TATA-binding protein (TBP) and of histones H2A and H2B. The protein is Importin subunit beta-5 (kap114) of Schizosaccharomyces pombe (strain 972 / ATCC 24843) (Fission yeast).